We begin with the raw amino-acid sequence, 292 residues long: Elongation factor Ts (292 aa).

Residues 82 to 85 (TDFV) are involved in Mg(2+) ion dislocation from EF-Tu.

Belongs to the EF-Ts family.

The protein localises to the cytoplasm. In terms of biological role, associates with the EF-Tu.GDP complex and induces the exchange of GDP to GTP. It remains bound to the aminoacyl-tRNA.EF-Tu.GTP complex up to the GTP hydrolysis stage on the ribosome. In Legionella pneumophila subsp. pneumophila (strain Philadelphia 1 / ATCC 33152 / DSM 7513), this protein is Elongation factor Ts.